The chain runs to 240 residues: Uridylate kinase (240 aa).

Residue 12-15 (KLSG) coordinates ATP. UMP is bound at residue G54. G55 and R59 together coordinate ATP. UMP is bound by residues D74 and 135–142 (TGNPFFTT). T162, Y168, and D171 together coordinate ATP.

It belongs to the UMP kinase family. As to quaternary structure, homohexamer.

It is found in the cytoplasm. It catalyses the reaction UMP + ATP = UDP + ADP. Its pathway is pyrimidine metabolism; CTP biosynthesis via de novo pathway; UDP from UMP (UMPK route): step 1/1. Its activity is regulated as follows. Inhibited by UTP. Its function is as follows. Catalyzes the reversible phosphorylation of UMP to UDP. This is Uridylate kinase from Xanthomonas axonopodis pv. citri (strain 306).